The chain runs to 150 residues: Large ribosomal subunit protein bL9 (150 aa).

The protein belongs to the bacterial ribosomal protein bL9 family.

Its function is as follows. Binds to the 23S rRNA. The sequence is that of Large ribosomal subunit protein bL9 from Polynucleobacter asymbioticus (strain DSM 18221 / CIP 109841 / QLW-P1DMWA-1) (Polynucleobacter necessarius subsp. asymbioticus).